The sequence spans 185 residues: MATTTTPRLKTKYREEIAGKLQEEFSYENVMQTPGLVKIVVNMGVGDAARDSKLIDGAIRDLTTITGQKPAVTKARKSIAQFKLREGQPIGAHVTLRGDRMWEFLDRTLSLALPRIRDFRGLSPKQFDGRGNYTFGLTEQVMFHEIDQDKIDRVRGMDITVVTTATNDAEGRALLRHLGFPFKEA.

It belongs to the universal ribosomal protein uL5 family. As to quaternary structure, part of the 50S ribosomal subunit; part of the 5S rRNA/L5/L18/L25 subcomplex. Contacts the 5S rRNA and the P site tRNA. Forms a bridge to the 30S subunit in the 70S ribosome.

Its function is as follows. This is one of the proteins that bind and probably mediate the attachment of the 5S RNA into the large ribosomal subunit, where it forms part of the central protuberance. In the 70S ribosome it contacts protein S13 of the 30S subunit (bridge B1b), connecting the 2 subunits; this bridge is implicated in subunit movement. Contacts the P site tRNA; the 5S rRNA and some of its associated proteins might help stabilize positioning of ribosome-bound tRNAs. This Streptomyces avermitilis (strain ATCC 31267 / DSM 46492 / JCM 5070 / NBRC 14893 / NCIMB 12804 / NRRL 8165 / MA-4680) protein is Large ribosomal subunit protein uL5.